The chain runs to 209 residues: DNA ADP-ribosyl transferase (209 aa).

Residues 9–209 (TPIYHITHID…RVCIRKDWYY (201 aa)) enclose the DarT domain. NAD(+) contacts are provided by residues 13–15 (HIT), Gly-22, and Leu-30. The segment at 35 to 53 (SPPKQRSIAYAHIQERRNR) is NAD(+)-binding element. A DNA-binding region spans residues 44 to 50 (YAHIQER). Arg-51 is a binding site for NAD(+). Arg-51 serves as the catalytic Proton acceptor. DNA-binding regions lie at residues 75–80 (RSPMLY), 145–148 (SYWA), and 154–158 (REKKQ). The interval 116–160 (TDRHGVLSHARFFRQLEELAQLDWEAIQASYWADPPELREKKQAE) is ADP-ribosylating turn-turn loop. Residue Glu-160 is part of the active site.

This sequence belongs to the DarT ADP-ribosyltransferase family. As to quaternary structure, interacts with cognate antitoxin DarG (via C-terminus); this heterodimeric complex neutralizes the toxic effect of DarT by preventing ssDNA binding to DarT and consequently inactivating the toxin by direct protein-protein interactions.

The catalysed reaction is a thymidine in DNA + NAD(+) = an N-(ADP-alpha-D-ribosyl)-thymidine in DNA + nicotinamide + H(+). In terms of biological role, toxic component of the hybrid type II/IV toxin-antitoxin (TA) system DarTG, which plays a crucial role in controlling bacterial growth and bacteriophage infection. In case of phage infection, DarT toxin ADP-ribosylates DNA, which inhibits both viral DNA and RNA synthesis and leads to abortive infection. ADP-ribosylates ssDNA on the second thymidine of the consensus sequence 5'-TNTC-3'; the protein does not auto-modify. Arg-51 is highly flexible, allowing it to assume multiple positions in the crystal structures. Its toxic effect is neutralized by cognate antitoxin DarG. The protein is DNA ADP-ribosyl transferase of Thermus sp. (strain 2.9).